Here is a 376-residue protein sequence, read N- to C-terminus: Probable low-specificity L-threonine aldolase (376 aa).

Residues 1–21 (MSGSVTSTTTETRLCPSNQGS) show a composition bias toward polar residues. The interval 1-22 (MSGSVTSTTTETRLCPSNQGSA) is disordered. Lys-226 carries the post-translational modification N6-(pyridoxal phosphate)lysine.

This sequence belongs to the threonine aldolase family. In terms of assembly, homotetramer. It depends on pyridoxal 5'-phosphate as a cofactor.

The enzyme catalyses L-threonine = acetaldehyde + glycine. It catalyses the reaction L-allo-threonine = acetaldehyde + glycine. It participates in amino-acid degradation; L-threonine degradation via aldolase pathway; acetaldehyde and glycine from L-threonine: step 1/1. This is Probable low-specificity L-threonine aldolase (gly1) from Schizosaccharomyces pombe (strain 972 / ATCC 24843) (Fission yeast).